A 300-amino-acid polypeptide reads, in one-letter code: C-5 sterol desaturase (300 aa).

The next 4 membrane-spanning stretches (helical) occupy residues 3 to 23 (DPVLFAIPCFLLLLILEWTAA), 68 to 88 (SLALLGYAAIYAYLAPWQLSA), 91 to 111 (WYTWVIAIVGVDLLYYSYHRI), and 147 to 167 (ILMWVPLPLMGLPPWMVFCSW). In terms of domain architecture, Fatty acid hydroxylase spans 94–227 (WVIAIVGVDL…LIIWDRLFGS (134 aa)).

Belongs to the sterol desaturase family.

It is found in the cell membrane. The protein is C-5 sterol desaturase (erg3) of Mycobacterium bovis (strain ATCC BAA-935 / AF2122/97).